Here is a 380-residue protein sequence, read N- to C-terminus: Alcohol dehydrogenase 1 (380 aa).

C48, T50, H70, C100, C103, C106, C114, and C178 together coordinate Zn(2+). T50 and H70 together coordinate an alcohol. T50 lines the NAD(+) pocket. NAD(+)-binding positions include 203–208, D227, R232, T273, V296, 296–298, F323, and R373; these read GLGAVG and VGV.

Belongs to the zinc-containing alcohol dehydrogenase family. As to quaternary structure, homodimer. Homotetramer. Zn(2+) serves as cofactor.

Its subcellular location is the cytoplasm. The enzyme catalyses a primary alcohol + NAD(+) = an aldehyde + NADH + H(+). It catalyses the reaction a secondary alcohol + NAD(+) = a ketone + NADH + H(+). The chain is Alcohol dehydrogenase 1 (ADH1) from Solanum tuberosum (Potato).